A 188-amino-acid polypeptide reads, in one-letter code: Elongation factor P (188 aa).

It belongs to the elongation factor P family.

The protein localises to the cytoplasm. Its pathway is protein biosynthesis; polypeptide chain elongation. Its function is as follows. Involved in peptide bond synthesis. Stimulates efficient translation and peptide-bond synthesis on native or reconstituted 70S ribosomes in vitro. Probably functions indirectly by altering the affinity of the ribosome for aminoacyl-tRNA, thus increasing their reactivity as acceptors for peptidyl transferase. This Methylorubrum populi (strain ATCC BAA-705 / NCIMB 13946 / BJ001) (Methylobacterium populi) protein is Elongation factor P.